Reading from the N-terminus, the 93-residue chain is MPRSLKKGPFVDDHLQKKVDAQNEAGTHNVIRTWSRRSVVTPDFLGHTFAVHDGRKHTPVFVTESMVGHKLGEFAPTRTFKGHEKDDRKGRRR.

Disordered regions lie at residues 1-24 and 73-93; these read MPRS…AQNE and EFAP…GRRR. 2 stretches are compositionally biased toward basic and acidic residues: residues 9 to 21 and 81 to 93; these read PFVD…KVDA and KGHE…GRRR.

This sequence belongs to the universal ribosomal protein uS19 family.

Protein S19 forms a complex with S13 that binds strongly to the 16S ribosomal RNA. This chain is Small ribosomal subunit protein uS19, found in Kineococcus radiotolerans (strain ATCC BAA-149 / DSM 14245 / SRS30216).